We begin with the raw amino-acid sequence, 328 residues long: Dolichyl-diphosphooligosaccharide--protein glycosyltransferase subunit MAGT1 (328 aa).

The signal sequence occupies residues 1 to 22; the sequence is MAALPVLVLVLLLACGGPRAAG. Residues 23–177 lie on the Extracellular side of the membrane; it reads QKRKEMVLSE…DVNIRVIRPP (155 aa). One can recognise a Thioredoxin domain in the interval 40 to 168; the sequence is WTSKRSVIRM…LARWVADRTD (129 aa). N-linked (GlcNAc...) asparagine glycosylation occurs at asparagine 64. Cysteine 80 and cysteine 83 are oxidised to a cystine. A helical membrane pass occupies residues 178–198; it reads NYAGPLMLGLLLAVIGGLVYL. Topologically, residues 199–211 are cytoplasmic; it reads RGSNLDFLYNKTG. Residues 212–232 traverse the membrane as a helical segment; sequence WAFAALCFVLAMTSGQMWNHI. Topologically, residues 233–257 are extracellular; sequence RGPPYAHKNPHTGQVNYIHGSSQAQ. Residues 258 to 278 form a helical membrane-spanning segment; that stretch reads FVAETHIVLLFNGGVTLGMVL. Over 279 to 293 the chain is Cytoplasmic; sequence LHEAATSDMDVGKRK. Residues 294 to 314 traverse the membrane as a helical segment; sequence IMCIAGIGLVVFFFSWLLSVF. Topologically, residues 315 to 328 are extracellular; that stretch reads RSKYHGYPYSFLMS.

Belongs to the OST3/OST6 family. As to quaternary structure, accessory component of the STT3B-containing form of the oligosaccharyltransferase (OST) complex. OST exists in two different complex forms which contain common core subunits RPN1, RPN2, OST48, OST4, DAD1 and TMEM258, either STT3A or STT3B as catalytic subunits, and form-specific accessory subunits. OST can form stable complexes with the Sec61 complex or with both the Sec61 and TRAP complexes.

It is found in the cell membrane. It localises to the endoplasmic reticulum. Its subcellular location is the endoplasmic reticulum membrane. The protein operates within protein modification; protein glycosylation. Functionally, accessory component of the STT3B-containing form of the N-oligosaccharyl transferase (OST) complex which catalyzes the transfer of a high mannose oligosaccharide from a lipid-linked oligosaccharide donor to an asparagine residue within an Asn-X-Ser/Thr consensus motif in nascent polypeptide chains. Involved in N-glycosylation of STT3B-dependent substrates. Specifically required for the glycosylation of a subset of acceptor sites that are near cysteine residues; in this function seems to act redundantly with TUSC3. In its oxidized form proposed to form transient mixed disulfides with a glycoprotein substrate to facilitate access of STT3B to the unmodified acceptor site. Also has oxidoreductase-independent functions in the STT3B-containing OST complex possibly involving substrate recognition. Could indirectly play a role in Mg(2+) transport in epithelial cells. This chain is Dolichyl-diphosphooligosaccharide--protein glycosyltransferase subunit MAGT1, found in Gallus gallus (Chicken).